A 216-amino-acid polypeptide reads, in one-letter code: MQLLHIDSAITGDQSVSRQLTAQIVEAWKASHPATQVSYLDLVADAPAHFTMDAMAPRTGQTDGLSEAQQRENAVSERLVSQFLAADVVVIGAPFYNFAIPTQLKAWIDRIAQPGRTFQYTANGPEGLAKGKTVIVASSRGGVYSTSEGGRAMEHQESYLQTVLGFFGVTDVRFVRAEGVAMGGDAKAQALAAAAQAIEAHVKAHAANQDRVSQAA.

FMN-binding positions include 15–17 and 139–142; these read SVS and SRGG.

Belongs to the azoreductase type 1 family. Homodimer. The cofactor is FMN.

It carries out the reaction 2 a quinone + NADH + H(+) = 2 a 1,4-benzosemiquinone + NAD(+). The catalysed reaction is N,N-dimethyl-1,4-phenylenediamine + anthranilate + 2 NAD(+) = 2-(4-dimethylaminophenyl)diazenylbenzoate + 2 NADH + 2 H(+). Quinone reductase that provides resistance to thiol-specific stress caused by electrophilic quinones. Functionally, also exhibits azoreductase activity. Catalyzes the reductive cleavage of the azo bond in aromatic azo compounds to the corresponding amines. The protein is FMN-dependent NADH:quinone oxidoreductase of Acidovorax ebreus (strain TPSY) (Diaphorobacter sp. (strain TPSY)).